The following is a 615-amino-acid chain: Delta(14)-sterol reductase LBR (615 aa).

In terms of domain architecture, Tudor spans 1-62 (MPSRKFADGE…DIKPLTSFRQ (62 aa)). At 1–211 (MPSRKFADGE…IRAKDLEFGG (211 aa)) the chain is on the nuclear side. The segment at 53-109 (DIKPLTSFRQRKGGSTSSSPSRRRGSRSRSRSRSPGRPPKSARRSASASHQADIKEA) is disordered. The residue at position 55 (Lys-55) is an N6-acetyllysine. Phosphothreonine is present on Thr-58. Residues Ser-59 and Ser-67 each carry the phosphoserine modification. A phosphoserine; by CDK1 mark is found at Ser-71 and Ser-86. Residues 73 to 86 (SRRRGSRSRSRSRS) show a composition bias toward basic residues. Ser-97 and Ser-99 each carry phosphoserine. Residue Thr-118 is modified to Phosphothreonine. Residue Ser-128 is modified to Phosphoserine. Position 200 is a phosphothreonine (Thr-200). The next 8 membrane-spanning stretches (helical) occupy residues 212 to 232 (VPGVFLIMFGLPVFLFLLLLM), 258 to 278 (VFGVYLLWFLIQVVFYLLPIG), 299 to 319 (FYAFILTSAVIGTSLFQGVEF), 326 to 346 (FLQFALAATVFCVVLSVYLYM), 415 to 435 (VPSLAMILVNSFQLLYVVDAL), 447 to 467 (IIHDGFGFMLAFGDLVWVPFI), 481 to 501 (EVSWPMASLIIVLKFCGYVIF), and 561 to 581 (ACGFNHILPYFYIIYFTMLLV). Lys-594 and Lys-601 each carry N6-acetyllysine.

This sequence belongs to the ERG4/ERG24 family. Interacts with CBX5. Interacts with DNA. Interaction with DNA is sequence independent with higher affinity for supercoiled and relaxed circular DNA than linear DNA. Interacts with lamin B. Interacts with CLNK. Interacts with TMEM147; promoting LBR localization to the nucleus inner membrane. Post-translationally, phosphorylated by CDK1 in mitosis when the inner nuclear membrane breaks down into vesicles that dissociate from the lamina and the chromatin. It is phosphorylated by different protein kinases in interphase when the membrane is associated with these structures. Phosphorylation of LBR and HP1 proteins may be responsible for some of the alterations in chromatin organization and nuclear structure which occur at various times during the cell cycle. Phosphorylated by SRPK1. In late anaphase LBR is dephosphorylated, probably by PP1 and/or PP2A, allowing reassociation with chromatin.

It localises to the nucleus inner membrane. It is found in the nucleus. Its subcellular location is the cytoplasm. The protein localises to the endoplasmic reticulum membrane. It catalyses the reaction 5alpha-cholest-8,14-dien-3beta-ol + NADPH + H(+) = 5alpha-cholest-8-en-3beta-ol + NADP(+). The enzyme catalyses 4,4-dimethyl-5alpha-cholesta-8,24-dien-3beta-ol + NADP(+) = 4,4-dimethyl-5alpha-cholesta-8,14,24-trien-3beta-ol + NADPH + H(+). It carries out the reaction 4,4-dimethyl-8,14-cholestadien-3beta-ol + NADPH + H(+) = 4,4-dimethyl-5alpha-cholest-8-en-3beta-ol + NADP(+). Its pathway is steroid biosynthesis; cholesterol biosynthesis. Catalyzes the reduction of the C14-unsaturated bond of lanosterol, as part of the metabolic pathway leading to cholesterol biosynthesis. Plays a critical role in myeloid cell cholesterol biosynthesis which is essential to both myeloid cell growth and functional maturation. Mediates the activation of NADPH oxidases, perhaps by maintaining critical levels of cholesterol required for membrane lipid raft formation during neutrophil differentiation. Anchors the lamina and the heterochromatin to the inner nuclear membrane. The protein is Delta(14)-sterol reductase LBR (LBR) of Pongo abelii (Sumatran orangutan).